The sequence spans 204 residues: Somatotropin (204 aa).

Positions 1–17 (MDRAVLLLSVLSLGVSS) are cleaved as a signal peptide. Gln-18 is subject to Pyrrolidone carboxylic acid. Residue His-35 coordinates Zn(2+). Cys-69 and Cys-177 are disulfide-bonded. Glu-186 lines the Zn(2+) pocket. A disulfide bridge links Cys-194 with Cys-202.

This sequence belongs to the somatotropin/prolactin family.

It is found in the secreted. In terms of biological role, growth hormone plays an important role in growth control and is involved in the regulation of several anabolic processes. Implicated as an osmoregulatory substance important for seawater adaptation. The polypeptide is Somatotropin (gh) (Morone saxatilis (Striped bass)).